The following is a 78-amino-acid chain: Putative membrane protein insertion efficiency factor (78 aa).

The protein belongs to the UPF0161 family.

The protein resides in the cell membrane. Could be involved in insertion of integral membrane proteins into the membrane. This chain is Putative membrane protein insertion efficiency factor, found in Bacillus cereus (strain G9842).